We begin with the raw amino-acid sequence, 78 residues long: Large ribosomal subunit protein bL28 (78 aa).

Belongs to the bacterial ribosomal protein bL28 family.

The protein is Large ribosomal subunit protein bL28 of Pasteurella multocida (strain Pm70).